A 289-amino-acid polypeptide reads, in one-letter code: Mas-related G-protein coupled receptor member G (289 aa).

The Extracellular portion of the chain corresponds to 1–13; it reads MFGLFGLWRTFDS. Residues 14–34 form a helical membrane-spanning segment; the sequence is VVFYLTLIVGLGGPVGNGLVL. Topologically, residues 35–42 are cytoplasmic; the sequence is WNLGFRIK. The chain crosses the membrane as a helical span at residues 43–63; the sequence is KGPFSIYLLHLAAADFLFLSC. Over 64–78 the chain is Extracellular; the sequence is RVGFSVAQAALGAQD. A helical transmembrane segment spans residues 79-99; the sequence is TLYFVLTFLWFAVGLWLLAAF. The Cytoplasmic portion of the chain corresponds to 100 to 120; that stretch reads SVERCLSDLFPACYQGCRPRH. A helical membrane pass occupies residues 121 to 141; the sequence is ASAVLCALVWTPTLPAVPLPA. The Extracellular segment spans residues 142-163; that stretch reads NACGLLRNSACPLVCPRYHVAS. A helical membrane pass occupies residues 164 to 184; that stretch reads VTWFLVLARVAWTAGVVLFVW. The Cytoplasmic segment spans residues 185–195; sequence VTCCSTRPRPR. A helical transmembrane segment spans residues 196-216; sequence LYGIVLGALLLLFFCGLPSVF. The Extracellular segment spans residues 217-221; it reads YWSLQ. Residues 222–242 traverse the membrane as a helical segment; sequence PLLNFLLPVFSPLATLLACVN. At 243 to 289 the chain is on the cytoplasmic side; that stretch reads SSSKPLIYSGLGRQPGKREPLRSVLRRALGEGAELGARGQSLPMGLL.

It belongs to the G-protein coupled receptor 1 family. Mas subfamily.

It is found in the cell membrane. Its function is as follows. Orphan receptor. May regulate nociceptor function and/or development, including the sensation or modulation of pain. The sequence is that of Mas-related G-protein coupled receptor member G (MRGPRG) from Homo sapiens (Human).